A 204-amino-acid chain; its full sequence is Guanylate kinase (204 aa).

The 179-residue stretch at 18–196 folds into the Guanylate kinase-like domain; it reads PKLFTISAPA…SYEILKSIFI (179 aa). 25 to 32 is an ATP binding site; that stretch reads APAGAGKT.

It belongs to the guanylate kinase family.

Its subcellular location is the cytoplasm. It carries out the reaction GMP + ATP = GDP + ADP. Functionally, essential for recycling GMP and indirectly, cGMP. This is Guanylate kinase from Chlamydia felis (strain Fe/C-56) (Chlamydophila felis).